The following is a 243-amino-acid chain: Probable transcriptional regulatory protein BH0025 (243 aa).

Belongs to the TACO1 family.

It is found in the cytoplasm. This chain is Probable transcriptional regulatory protein BH0025, found in Borrelia hermsii (strain HS1 / DAH).